We begin with the raw amino-acid sequence, 218 residues long: Protein GrpE (218 aa).

2 stretches are compositionally biased toward basic and acidic residues: residues 1–13 (MSKN…HQNN) and 20–32 (VDKK…NKQE). The disordered stretch occupies residues 1-32 (MSKNNENIKHQNNDKVNNQVDKKETKNHNKQE).

The protein belongs to the GrpE family. Homodimer.

The protein resides in the cytoplasm. In terms of biological role, participates actively in the response to hyperosmotic and heat shock by preventing the aggregation of stress-denatured proteins, in association with DnaK and GrpE. It is the nucleotide exchange factor for DnaK and may function as a thermosensor. Unfolded proteins bind initially to DnaJ; upon interaction with the DnaJ-bound protein, DnaK hydrolyzes its bound ATP, resulting in the formation of a stable complex. GrpE releases ADP from DnaK; ATP binding to DnaK triggers the release of the substrate protein, thus completing the reaction cycle. Several rounds of ATP-dependent interactions between DnaJ, DnaK and GrpE are required for fully efficient folding. The protein is Protein GrpE of Ureaplasma parvum serovar 3 (strain ATCC 27815 / 27 / NCTC 11736).